The sequence spans 29 residues: Photosystem I reaction center subunit XII (29 aa).

A helical membrane pass occupies residues 7–26 (IFVALILALFSFVLAIRLGT).

The protein belongs to the PsaM family.

The protein resides in the plastid. It localises to the chloroplast thylakoid membrane. The protein is Photosystem I reaction center subunit XII of Guillardia theta (Cryptophyte).